Reading from the N-terminus, the 638-residue chain is Threonine--tRNA ligase (638 aa).

Residues 1–61 (MPVITLPDGS…DADAQLQIIT (61 aa)) form the TGS domain. Residues 243 to 534 (DHRKIGKALN…LTEEFAGFFP (292 aa)) form a catalytic region. Zn(2+)-binding residues include cysteine 334, histidine 385, and histidine 511.

This sequence belongs to the class-II aminoacyl-tRNA synthetase family. Homodimer. Zn(2+) is required as a cofactor.

The protein localises to the cytoplasm. It carries out the reaction tRNA(Thr) + L-threonine + ATP = L-threonyl-tRNA(Thr) + AMP + diphosphate + H(+). Its function is as follows. Catalyzes the attachment of threonine to tRNA(Thr) in a two-step reaction: L-threonine is first activated by ATP to form Thr-AMP and then transferred to the acceptor end of tRNA(Thr). Also edits incorrectly charged L-seryl-tRNA(Thr). This is Threonine--tRNA ligase from Alteromonas mediterranea (strain DSM 17117 / CIP 110805 / LMG 28347 / Deep ecotype).